The sequence spans 612 residues: Autophagy-related protein 28 (612 aa).

The segment at 44-72 (NHMEEQSPKFESSFPRRTSEGPVDDVGKS) is disordered. Residues 214–296 (YQAKAQDKQA…QRTLKNECFQ (83 aa)) are a coiled coil.

Belongs to the ATG28 family. Interacts with ATG35.

The protein localises to the cytoplasm. It is found in the vacuole membrane. It localises to the cytoplasmic vesicle membrane. Required for the autophagic degradation of peroxisomes called pexophagy, but not essential for general autophagy. Involved in resistance to elevated pH. This is Autophagy-related protein 28 (ATG28) from Komagataella phaffii (strain GS115 / ATCC 20864) (Yeast).